The chain runs to 390 residues: RNA polymerase sigma factor SigA (390 aa).

Positions 48–57 are enriched in acidic residues; the sequence is FLEPQTDEDD. The tract at residues 48-75 is disordered; it reads FLEPQTDEDDAKSGKAAKSRRRTQSKKK. Basic residues predominate over residues 62-75; the sequence is KAAKSRRRTQSKKK. Residues 158–228 form a sigma-70 factor domain-2 region; that stretch reads MVQSNLRLVV…TRAIADQSRT (71 aa). The short motif at 182 to 185 is the Interaction with polymerase core subunit RpoC element; sequence DLIQ. The segment at 237-312 is sigma-70 factor domain-3; that stretch reads ETISRIKKTT…ESDGETPEDQ (76 aa). Positions 325–378 are sigma-70 factor domain-4; it reads VLDSLSPRERDVLRLRYGLDDGRMKTLEEIGQIFNVTRERIRQIEAKALRKLRH. The segment at residues 351 to 370 is a DNA-binding region (H-T-H motif); the sequence is LEEIGQIFNVTRERIRQIEA.

This sequence belongs to the sigma-70 factor family. RpoD/SigA subfamily. Interacts transiently with the RNA polymerase catalytic core.

It is found in the cytoplasm. Its function is as follows. Sigma factors are initiation factors that promote the attachment of RNA polymerase to specific initiation sites and are then released. This sigma factor is the primary sigma factor during exponential growth. This Nostoc sp. (strain PCC 7120 / SAG 25.82 / UTEX 2576) protein is RNA polymerase sigma factor SigA.